Here is a 98-residue protein sequence, read N- to C-terminus: Small ribosomal subunit protein bS20 (98 aa).

Residues 1–15 are compositionally biased toward basic residues; that stretch reads MAPKKTTKKGGPKKR. Residues 1–21 are disordered; it reads MAPKKTTKKGGPKKRPSAEKR.

It belongs to the bacterial ribosomal protein bS20 family.

In terms of biological role, binds directly to 16S ribosomal RNA. This is Small ribosomal subunit protein bS20 from Chlamydia felis (strain Fe/C-56) (Chlamydophila felis).